An 833-amino-acid polypeptide reads, in one-letter code: Leucine--tRNA ligase (833 aa).

The short motif at 41 to 52 (PYPSGAGLHVGH) is the 'HIGH' region element. The 'KMSKS' region motif lies at 610–614 (KMSKS). K613 contributes to the ATP binding site.

The protein belongs to the class-I aminoacyl-tRNA synthetase family.

The protein resides in the cytoplasm. It catalyses the reaction tRNA(Leu) + L-leucine + ATP = L-leucyl-tRNA(Leu) + AMP + diphosphate. The protein is Leucine--tRNA ligase of Streptococcus pneumoniae serotype 4 (strain ATCC BAA-334 / TIGR4).